The primary structure comprises 697 residues: Colicin-D (697 aa).

Positions histidine 17–serine 24 match the TonB box motif.

Belongs to the cloacin colicin family.

In terms of biological role, colicins are polypeptide toxins produced by and active against E.coli and closely related bacteria. Functionally, colicin D inhibits protein synthesis. The polypeptide is Colicin-D (cda) (Escherichia coli).